Reading from the N-terminus, the 468-residue chain is 6-phospho-beta-galactosidase (468 aa).

Residues Gln-19, His-116, Asn-159, Glu-160, and Asn-297 each contribute to the D-galactose 6-phosphate site. Glu-160 functions as the Proton donor in the catalytic mechanism. The active-site Nucleophile is Glu-375. Residues Ser-428, Trp-429, Lys-435, and Tyr-437 each coordinate D-galactose 6-phosphate.

This sequence belongs to the glycosyl hydrolase 1 family.

It carries out the reaction a 6-phospho-beta-D-galactoside + H2O = D-galactose 6-phosphate + an alcohol. Its pathway is carbohydrate metabolism; lactose degradation; D-galactose 6-phosphate and beta-D-glucose from lactose 6-phosphate: step 1/1. The sequence is that of 6-phospho-beta-galactosidase from Streptococcus pyogenes serotype M2 (strain MGAS10270).